The chain runs to 193 residues: Fe/S biogenesis protein NfuA (193 aa).

Positions 150 and 153 each coordinate [4Fe-4S] cluster.

This sequence belongs to the NfuA family. As to quaternary structure, homodimer. The cofactor is [4Fe-4S] cluster.

Involved in iron-sulfur cluster biogenesis. Binds a 4Fe-4S cluster, can transfer this cluster to apoproteins, and thereby intervenes in the maturation of Fe/S proteins. Could also act as a scaffold/chaperone for damaged Fe/S proteins. This chain is Fe/S biogenesis protein NfuA, found in Histophilus somni (strain 129Pt) (Haemophilus somnus).